Consider the following 665-residue polypeptide: Succinate dehydrogenase [ubiquinone] flavoprotein subunit B, mitochondrial (665 aa).

The N-terminal 45 residues, 1 to 45, are a transit peptide targeting the mitochondrion; that stretch reads MALLKVAPSRLLSRALQLTSTLQNCTATSIAARRNFHFTVYGRKD. The FAD site is built by Ala-72, Ala-75, Thr-94, Lys-95, and Ser-101. His-102 bears the Tele-8alpha-FAD histidine mark. Residues Thr-103, Gly-108, Ala-224, and Asp-278 each contribute to the FAD site. His-299, Arg-343, and His-410 together coordinate oxaloacetate. Catalysis depends on Arg-343, which acts as the Proton acceptor. Residue Glu-443 participates in FAD binding. Oxaloacetate contacts are provided by Arg-454 and Ala-457. FAD is bound by residues Ser-459 and Leu-460.

It belongs to the FAD-dependent oxidoreductase 2 family. FRD/SDH subfamily. As to quaternary structure, component of complex II composed of four subunits: a flavoprotein (FP), an iron-sulfur protein (IP), and a cytochrome b composed of a large and a small subunit. FAD is required as a cofactor.

It is found in the mitochondrion inner membrane. It catalyses the reaction a ubiquinone + succinate = a ubiquinol + fumarate. The enzyme catalyses (R)-malate + a quinone = enol-oxaloacetate + a quinol. It carries out the reaction (S)-malate + a quinone = enol-oxaloacetate + a quinol. It functions in the pathway carbohydrate metabolism; tricarboxylic acid cycle; fumarate from succinate (eukaryal route): step 1/1. Enol-oxaloacetate inhibits the succinate dehydrogenase activity. Its function is as follows. Flavoprotein (FP) subunit of succinate dehydrogenase (SDH) that is involved in complex II of the mitochondrial electron transport chain and is responsible for transferring electrons from succinate to ubiquinone (coenzyme Q). SDH also oxidizes malate to the non-canonical enol form of oxaloacetate, enol-oxaloacetate. Enol-oxaloacetate, which is a potent inhibitor of the succinate dehydrogenase activity, is further isomerized into keto-oxaloacetate. The sequence is that of Succinate dehydrogenase [ubiquinone] flavoprotein subunit B, mitochondrial (sdha-b) from Xenopus laevis (African clawed frog).